Reading from the N-terminus, the 554-residue chain is Potassium-transporting ATPase potassium-binding subunit (554 aa).

Helical transmembrane passes span 3–23 (PVLAGVLQLLALTAALALAHV), 60–80 (PAYLRGVLAFSLAGVLFLYLL), 131–151 (GLAVQNFVSAAVGIAVAVALV), 174–194 (VRVLVPIAAVGAVILVACGVI), 252–272 (LFEIFLILLIPVALTRTFGIM), 279–299 (GYAILGTMAAIWAGFVALMMW), 323–343 (FGIGGSSLFAVTTTLTSTGAV), 352–372 (GLGGGITMLGMMLGEIAPGGV), 375–395 (GLYGMLVMAVVAVFIAGLMVG), 412–432 (FAACYILITPALVLVFTAAAM), 481–501 (LGLAMLLGRFVPMVFVLALAG), and 522–542 (LFAGLLAGAVLIITGLTYFPA).

It belongs to the KdpA family. As to quaternary structure, the system is composed of three essential subunits: KdpA, KdpB and KdpC.

It localises to the cell membrane. Functionally, part of the high-affinity ATP-driven potassium transport (or Kdp) system, which catalyzes the hydrolysis of ATP coupled with the electrogenic transport of potassium into the cytoplasm. This subunit binds the extracellular potassium ions and delivers the ions to the membrane domain of KdpB through an intramembrane tunnel. The sequence is that of Potassium-transporting ATPase potassium-binding subunit from Streptomyces coelicolor (strain ATCC BAA-471 / A3(2) / M145).